Reading from the N-terminus, the 982-residue chain is Chromosome partition protein Smc (982 aa).

Residue 33–40 (PNGSGKSN) coordinates ATP. Coiled-coil stretches lie at residues 171–231 (RYTK…ELAV), 280–310 (SADM…VIID), and 337–377 (QTQL…QIEK). The SMC hinge domain occupies 416–535 (TGILNTLGTF…AKDLNSAINL (120 aa)). Coiled-coil stretches lie at residues 575–718 (SASL…SARE) and 753–822 (VKLS…IASN).

The protein belongs to the SMC family. As to quaternary structure, homodimer.

The protein localises to the cytoplasm. Required for chromosome condensation and partitioning. The sequence is that of Chromosome partition protein Smc from Mycoplasma genitalium (strain ATCC 33530 / DSM 19775 / NCTC 10195 / G37) (Mycoplasmoides genitalium).